Consider the following 317-residue polypeptide: MSGGLDVLQMKEEDVLKFLAAGTHLGGTNLDFQMEQYVYKRKSDGIYIINLKKTWEKLLLAARAIVAIENPADVCVISSRNTGQRACLKFASGTGATTFAGRFTPGTFTNQIQAAFREPRLLIVTDPRADHQPLTEASYVNIPTIALCNTDSPLRYVDIAIPCNNKGPHSVGLMWWMLAREVLRMRGTISREHPWEVMPDLYFYRDPEEIEKEEQAAAEKAVGKEEFQGEWSAPVADIAQLEVPDWSEGVQVPSVPIQQFPAGIEAATAAAAVVAAKPGPTTEGYSEDWSAQPATEDWSAAPTAQAGDWGGSTAEWS.

Residue S2 is modified to N-acetylserine. Laminin-binding regions lie at residues 161–180 (IPCN…MLAR) and 205–229 (RDPE…EFQG). [DE]-W-[ST] repeat units follow at residues 230–232 (EWS), 245–247 (DWS), 288–290 (DWS), 297–299 (DWS), and 315–317 (EWS). Residues 242–317 (EVPDWSEGVQ…DWGGSTAEWS (76 aa)) are laminin-binding. Residues 278–317 (PGPTTEGYSEDWSAQPATEDWSAAPTAQAGDWGGSTAEWS) form a disordered region.

Belongs to the universal ribosomal protein uS2 family. Monomer (37LRP) and homodimer (67LR). Component of the small ribosomal subunit. Mature ribosomes consist of a small (40S) and a large (60S) subunit. The 40S subunit contains about 33 different proteins and 1 molecule of RNA (18S). The 60S subunit contains about 49 different proteins and 3 molecules of RNA (28S, 5.8S and 5S). Interacts with rps21. Interacts with several laminins including at least lamb1. Interacts with mdk. Post-translationally, acylated. Acylation may be a prerequisite for conversion of the monomeric 37 kDa laminin receptor precursor (37LRP) to the mature dimeric 67 kDa laminin receptor (67LR), and may provide a mechanism for membrane association. In terms of processing, cleaved by stromelysin-3 (ST3) at the cell surface. Cleavage by stromelysin-3 may be a mechanism to alter cell-extracellular matrix interactions.

Its subcellular location is the cell membrane. The protein localises to the cytoplasm. The protein resides in the nucleus. Functionally, required for the assembly and/or stability of the 40S ribosomal subunit. Required for the processing of the 20S rRNA-precursor to mature 18S rRNA in a late step of the maturation of 40S ribosomal subunits. Also functions as a cell surface receptor for laminin. Plays a role in cell adhesion to the basement membrane and in the consequent activation of signaling transduction pathways. May play a role in cell fate determination and tissue morphogenesis. This is Small ribosomal subunit protein uS2 (rpsa) from Ictalurus punctatus (Channel catfish).